The sequence spans 237 residues: Uridylate kinase (237 aa).

K9–G12 is an ATP binding site. The interval G17–G22 is involved in allosteric activation by GTP. UMP is bound at residue G51. The ATP site is built by G52 and R56. UMP is bound by residues D71 and C132–T139. Residues T159, Y165, and D168 each coordinate ATP.

Belongs to the UMP kinase family. In terms of assembly, homohexamer.

The protein localises to the cytoplasm. The enzyme catalyses UMP + ATP = UDP + ADP. Its pathway is pyrimidine metabolism; CTP biosynthesis via de novo pathway; UDP from UMP (UMPK route): step 1/1. Allosterically activated by GTP. Inhibited by UTP. Catalyzes the reversible phosphorylation of UMP to UDP. The sequence is that of Uridylate kinase from Synechococcus sp. (strain CC9605).